The primary structure comprises 797 residues: Protocadherin beta-9 (797 aa).

Positions 1–26 are cleaved as a signal peptide; that stretch reads MKTRGFSFPRQRQVLFLFLFWGVSLA. The Extracellular portion of the chain corresponds to 27–690; it reads GSGFGRYSVT…AQADLLTVYL (664 aa). Cadherin domains are found at residues 35–133, 138–242, 247–347, 352–451, and 456–561; these read VTEE…SPVF, MVLK…VPQF, YETQ…PPEL, LSNS…APAF, and YTLF…SPFV. Asn169 carries an N-linked (GlcNAc...) asparagine glycan. Asn418 carries N-linked (GlcNAc...) asparagine glycosylation. An N-linked (GlcNAc...) asparagine glycan is attached at Asn567. The Cadherin 6 domain occupies 568–671; that stretch reads GSAPCTELVP…LVDGFSQPYL (104 aa). Residues 691 to 711 traverse the membrane as a helical segment; it reads VVALASVSSLFLLSVLLFVAV. Residues 712-797 are Cytoplasmic-facing; it reads RLCRRSRAAS…TLPNSFGFNY (86 aa). The interval 777–797 is disordered; that stretch reads HRGGKEIEENSTLPNSFGFNY. A compositionally biased stretch (polar residues) spans 786–797; it reads NSTLPNSFGFNY.

Its subcellular location is the cell membrane. In terms of biological role, potential calcium-dependent cell-adhesion protein. May be involved in the establishment and maintenance of specific neuronal connections in the brain. This chain is Protocadherin beta-9 (PCDHB9), found in Homo sapiens (Human).